A 787-amino-acid polypeptide reads, in one-letter code: Protocadherin beta-15 (787 aa).

An N-terminal signal peptide occupies residues 1–26; sequence MEPAGERFPEQRQVLILLLLLEVTLA. Topologically, residues 27-690 are extracellular; sequence GWEPRRYSVM…AQADSLTVYL (664 aa). Cadherin domains follow at residues 35–133, 138–242, 247–347, 352–451, and 456–561; these read VMEE…SPEF, ITLK…APEF, YEVQ…FPEL, LTSP…APAF, and YTLF…SPFV. N-linked (GlcNAc...) asparagine glycosylation is found at Asn418 and Asn436. A glycan (N-linked (GlcNAc...) asparagine) is linked at Asn567. One can recognise a Cadherin 6 domain in the interval 568-671; that stretch reads GSAPCTELVP…LVDGFSQPYL (104 aa). A helical membrane pass occupies residues 691–711; that stretch reads VVALASVSSLFLFSVLLFVAV. Over 712–787 the chain is Cytoplasmic; it reads RLCRRSRAAS…DSRRKSEFLE (76 aa).

The protein localises to the cell membrane. Functionally, potential calcium-dependent cell-adhesion protein. May be involved in the establishment and maintenance of specific neuronal connections in the brain. This chain is Protocadherin beta-15 (PCDHB15), found in Pan troglodytes (Chimpanzee).